Reading from the N-terminus, the 125-residue chain is C-X-C motif chemokine 9 (125 aa).

The first 22 residues, 1–22 (MKKSGVLFLLGIILLVLIGVQG), serve as a signal peptide directing secretion. 2 disulfides stabilise this stretch: C31/C58 and C33/C74. A disordered region spans residues 93–125 (VSQKKKQKNGKKHQKKKVLKVRKSQRSRQKKTT). Residues 94 to 125 (SQKKKQKNGKKHQKKKVLKVRKSQRSRQKKTT) show a composition bias toward basic residues.

Belongs to the intercrine alpha (chemokine CxC) family.

The protein localises to the secreted. In terms of biological role, cytokine that affects the growth, movement, or activation state of cells that participate in immune and inflammatory response. Chemotactic for activated T-cells. Binds to CXCR3. In Homo sapiens (Human), this protein is C-X-C motif chemokine 9 (CXCL9).